A 144-amino-acid chain; its full sequence is Large ribosomal subunit protein uL15 (144 aa).

The segment at 20–49 (GRGIGSGLGKTGGRGHKGQKSRSGGFHKVG) is disordered. Positions 21–31 (RGIGSGLGKTG) are enriched in gly residues.

It belongs to the universal ribosomal protein uL15 family. In terms of assembly, part of the 50S ribosomal subunit.

Functionally, binds to the 23S rRNA. This is Large ribosomal subunit protein uL15 from Neisseria meningitidis serogroup C (strain 053442).